Reading from the N-terminus, the 347-residue chain is WAT1-related protein At4g15540 (347 aa).

10 helical membrane-spanning segments follow: residues 15–35 (VVPF…SILY), 47–67 (VFVF…SLIF), 73–93 (LPTA…LGLT), 108–128 (TLSS…AIFF), 139–159 (ATQA…VIVL), 178–198 (WIIG…WFIL), 210–230 (IAVV…VCLL), 243–263 (GFSL…GSVI), 276–296 (ISLF…IFLG), and 299–319 (LHLG…TVIW). In terms of domain architecture, EamA 1 spans 30–158 (GSSILYKAAT…VSISGALVIV (129 aa)). The EamA 2 domain maps to 216 to 317 (YNLCATLISG…VILSFGFYTV (102 aa)).

It belongs to the drug/metabolite transporter (DMT) superfamily. Plant drug/metabolite exporter (P-DME) (TC 2.A.7.4) family.

Its subcellular location is the membrane. This chain is WAT1-related protein At4g15540, found in Arabidopsis thaliana (Mouse-ear cress).